Reading from the N-terminus, the 603-residue chain is NAD 5'-nucleotidase (603 aa).

The signal sequence occupies residues 1-25; the sequence is MLLSKKSASFALSAFAMLFTSVALA. Positions 44, 46, 94, 126, and 227 each coordinate Zn(2+). Substrate is bound by residues arginine 397, arginine 437, phenylalanine 456, and 540 to 546; that span reads YVAGGKD.

It belongs to the 5'-nucleotidase family. Zn(2+) is required as a cofactor.

The protein localises to the periplasm. It catalyses the reaction a ribonucleoside 5'-phosphate + H2O = a ribonucleoside + phosphate. Degrades NAD into adenosine and nicotinamide riboside, the latter being subsequently internalized by a specific permease. Also endowed with NAD(P) pyrophosphatase activity. Exhibits a broad substrate specificity, recognizing either mono- or dinucleotide nicotinamides and different adenosine phosphates with a maximal activity on 5'-adenosine monophosphate. This chain is NAD 5'-nucleotidase, found in Haemophilus influenzae (strain ATCC 51907 / DSM 11121 / KW20 / Rd).